A 430-amino-acid chain; its full sequence is Ribosomal protein uS12 methylthiotransferase RimO (430 aa).

The region spanning 2 to 119 (ISVYSISLGC…WPAMLAHALK (118 aa)) is the MTTase N-terminal domain. [4Fe-4S] cluster-binding residues include Cys11, Cys46, Cys81, Cys145, Cys149, and Cys152. The Radical SAM core domain occupies 131–361 (STGPSYAWLK…MEVQAEISEE (231 aa)). The TRAM domain occupies 364–430 (AVHEGTRQQV…TRTYDLVALA (67 aa)).

This sequence belongs to the methylthiotransferase family. RimO subfamily. It depends on [4Fe-4S] cluster as a cofactor.

Its subcellular location is the cytoplasm. The enzyme catalyses L-aspartate(89)-[ribosomal protein uS12]-hydrogen + (sulfur carrier)-SH + AH2 + 2 S-adenosyl-L-methionine = 3-methylsulfanyl-L-aspartate(89)-[ribosomal protein uS12]-hydrogen + (sulfur carrier)-H + 5'-deoxyadenosine + L-methionine + A + S-adenosyl-L-homocysteine + 2 H(+). Its function is as follows. Catalyzes the methylthiolation of an aspartic acid residue of ribosomal protein uS12. In Nitratidesulfovibrio vulgaris (strain ATCC 29579 / DSM 644 / CCUG 34227 / NCIMB 8303 / VKM B-1760 / Hildenborough) (Desulfovibrio vulgaris), this protein is Ribosomal protein uS12 methylthiotransferase RimO.